We begin with the raw amino-acid sequence, 416 residues long: Serine hydroxymethyltransferase (416 aa).

Residues L121 and 125 to 127 (GHL) each bind (6S)-5,6,7,8-tetrahydrofolate. At K229 the chain carries N6-(pyridoxal phosphate)lysine.

Belongs to the SHMT family. As to quaternary structure, homodimer. Pyridoxal 5'-phosphate is required as a cofactor.

The protein localises to the cytoplasm. The catalysed reaction is (6R)-5,10-methylene-5,6,7,8-tetrahydrofolate + glycine + H2O = (6S)-5,6,7,8-tetrahydrofolate + L-serine. The protein operates within one-carbon metabolism; tetrahydrofolate interconversion. It functions in the pathway amino-acid biosynthesis; glycine biosynthesis; glycine from L-serine: step 1/1. Catalyzes the reversible interconversion of serine and glycine with tetrahydrofolate (THF) serving as the one-carbon carrier. This reaction serves as the major source of one-carbon groups required for the biosynthesis of purines, thymidylate, methionine, and other important biomolecules. Also exhibits THF-independent aldolase activity toward beta-hydroxyamino acids, producing glycine and aldehydes, via a retro-aldol mechanism. This Neisseria gonorrhoeae (strain NCCP11945) protein is Serine hydroxymethyltransferase.